The sequence spans 446 residues: MENILDLWNQALAQIEKKLSKPSFETWMKSTKAHSLQGDTLTITAPNEFARDWLESRYLHLIADTIYELTGEELSIKFVIPQNQDVEDFMPKPQVKKAVKEDTSDFPQNMLNPKYTFDTFVIGSGNRFAHAASLAVAEAPAKAYNPLFIYGGVGLGKTHLMHAIGHYVIDHNPSAKVVYLSSEKFTNEFINSIRDNKAVDFRNRYRNVDVLLIDDIQFLAGKEQTQEEFFHTFNTLHEESKQIVISSDRPPKEIPTLEDRLRSRFEWGLITDITPPDLETRIAILRKKAKAEGLDIPNEVMLYIANQIDSNIRELEGALIRVVAYSSLINKDINADLAAEALKDIIPSSKPKVITIKEIQRVVGQQFNIKLEDFKAKKRTKSVAFPRQIAMYLSREMTDSSLPKIGEEFGGRDHTTVIHAHEKISKLLADDEQLQQHVKEIKEQLK.

The domain I, interacts with DnaA modulators stretch occupies residues M1–Q82. The domain II stretch occupies residues N83–T103. A domain III, AAA+ region region spans residues S104–D332. Residues G154, L155, G156, K157, and T158 each coordinate ATP. Position 158 (T158) interacts with Mg(2+). Positions S182–R206 match the Initiator specific motif (ISM) motif. The Mg(2+) site is built by D214 and D215. Positions I333–I346 are linker. The interval P347–K446 is domain IV, binds dsDNA.

Belongs to the DnaA family. As to quaternary structure, the DNA replisome assembles sequentially on oriC in this order; DnaA, DnaD, DnaB, DnaI-DnaC helicase. Oligomerizes as a right-handed, spiral filament on DNA at oriC. Forms an ATP-dependent helix on DNA at oriC; both DnaD and YabA inhibit formation of the DnaA helix. Forms an ATP-dependent oligomer, formation is stimulated by ds- and ssDNA; monomeric ADP-Soj inhibits oligomer formation. Interacts with DnaD. Interacts with YabA, and via YabA, with the replication machinery subunit beta sliding clamp DnaN. Interacts with YabA via domain IIIa (residues 109-275). Isolated domain I forms a 1:1 complex with SirA. Interacts with Soj, probably via domain III. Interacts via domains I and III with CcrZ. Interacts via domain IV with skin prophage-like element protein YqaH.

Its subcellular location is the cytoplasm. The protein resides in the nucleoid. It catalyses the reaction ATP + H2O = ADP + phosphate + H(+). Its activity is regulated as follows. Oligomerization of DnaA can be controlled by Soj; monomeric ADP-Soj inhibits formation of the DnaA helix. YabA prevents the cooperative binding of DnaA-ATP to oriC-containing sequences; increased levels of DnaN (beta sliding clamp subunit of DNA polymerase) removes YabA from association with DnaA on the chromosome, enabling increased association of DnaA with its chromosomal binding sites. Both Soj and YabA chase DnaA from oriC site, YabA tethers DnaA to the DNA replication fork via the beta sliding clamp subunit DnaN. SirA antagonizes the ability of DnaA to bind to the replication origin, and thus decreases replication inititation during sporulation. Small protein YqaH, part of the skin prophage-like element, binds to DnaA and antagonizes its replication initiation and transcriptional regulation activities. Plays an essential role in the initiation and regulation of chromosomal replication. ATP-DnaA binds to the origin of replication (oriC) to initiate formation of the DNA replication initiation complex once per cell cycle. Binds directly to oriC at a 9 bp consensus (DnaA box): 5'-TTATCCACA-3' and separates the double-stranded (ds)DNA. Forms a right-handed helical filament on oriC DNA; dsDNA binds to the exterior of the filament while single-stranded (ss)DNA is stabilized in the filament's interior. The ATP-DnaA-oriC complex binds and stabilizes one strand of the AT-rich DNA unwinding element (DUE or basal unwinding system, BUS), permitting loading of DNA polymerase. Binds ATP with high affinity, ADP with lower affinity, but not AMP, cAMP or cGMP; ATP stimulates binding to DnaA boxes. Once bound promotes sequence-specific strand separation of DnaA-trios (3'-GAT-5' consensus) adjacent to oriC in the presence of ATP but not ADP. Domains III and IV are sufficient to separate dsDNA strands. The 'initiator specific motif' (ISM) of domain III contacts the middle adenine residue of the DnaA-trio probably stretching and stabilizing ssDNA. DnaA-trio recognition is co-operative and depends on DnaA self-assembly. The ssDNA serves as an assembly region for the replication machinery. Tethered to DnaN (beta sliding clamp subunit of DNA polymerase) and thus replication forks by YabA. During replication initiation DnaA-ATP binds cooperatively to sequences in oriC. YabA prevents this cooperative binding while still allowing DnaA to bind DNA. During the cell cycle an initial phase occurs in which DnaA is associated with origin regions, then the origin regions become spatially separate from the centrally sequestered DnaA molecules, and most DnaA molecules are unable to reassociate with origin regions. Does not require YabA to bind DNA. During sporulation SirA prevents DnaA association with the replication origin to prevent excessive chromosome replication. Overexpression induces the SOS response; increasing expression of downstream dnaN blocks this induction. Over-initiation of DNA replication is very deleterious; isolated suppressors in relA, ndrR, dnaC, cshA and crrZ increase replication elongation, decrease replication inititation or lead to a decrease in the replicative DNA helicase. Binds acidic phospholipids. Its function is as follows. The half-life of ADP-DnaA is 1.5 minutes, of ATP-DnaA is 5 minutes at 37 degrees Celsius; in E.coli the half-life of ADP-DnaA is about 45 minutes. In terms of biological role, also acts as a transcriptional regulator. DnaA inhibits its own gene expression. DnaA binds specifically to the promoter regions of at least 20 operons (56 genes), including itself, sda and dnaB, and probably controls their expression in response to DNA replication inhibition. This is Chromosomal replication initiator protein DnaA from Bacillus subtilis (strain 168).